The primary structure comprises 564 residues: Dihydroxy-acid dehydratase (564 aa).

C55 lines the [2Fe-2S] cluster pocket. Position 87 (D87) interacts with Mg(2+). [2Fe-2S] cluster is bound at residue C128. Mg(2+) is bound by residues D129 and K130. K130 is subject to N6-carboxylysine. Position 200 (C200) interacts with [2Fe-2S] cluster. Residue E452 coordinates Mg(2+). S478 serves as the catalytic Proton acceptor.

The protein belongs to the IlvD/Edd family. As to quaternary structure, homodimer. [2Fe-2S] cluster is required as a cofactor. It depends on Mg(2+) as a cofactor.

It carries out the reaction (2R)-2,3-dihydroxy-3-methylbutanoate = 3-methyl-2-oxobutanoate + H2O. The enzyme catalyses (2R,3R)-2,3-dihydroxy-3-methylpentanoate = (S)-3-methyl-2-oxopentanoate + H2O. It functions in the pathway amino-acid biosynthesis; L-isoleucine biosynthesis; L-isoleucine from 2-oxobutanoate: step 3/4. Its pathway is amino-acid biosynthesis; L-valine biosynthesis; L-valine from pyruvate: step 3/4. In terms of biological role, functions in the biosynthesis of branched-chain amino acids. Catalyzes the dehydration of (2R,3R)-2,3-dihydroxy-3-methylpentanoate (2,3-dihydroxy-3-methylvalerate) into 2-oxo-3-methylpentanoate (2-oxo-3-methylvalerate) and of (2R)-2,3-dihydroxy-3-methylbutanoate (2,3-dihydroxyisovalerate) into 2-oxo-3-methylbutanoate (2-oxoisovalerate), the penultimate precursor to L-isoleucine and L-valine, respectively. This chain is Dihydroxy-acid dehydratase, found in Polaromonas naphthalenivorans (strain CJ2).